Reading from the N-terminus, the 207-residue chain is Small ribosomal subunit protein uS4 (207 aa).

Residues 97-160 (SRLDNVVYRM…KKQARIVEAL (64 aa)) form the S4 RNA-binding domain.

Belongs to the universal ribosomal protein uS4 family. As to quaternary structure, part of the 30S ribosomal subunit. Contacts protein S5. The interaction surface between S4 and S5 is involved in control of translational fidelity.

Functionally, one of the primary rRNA binding proteins, it binds directly to 16S rRNA where it nucleates assembly of the body of the 30S subunit. With S5 and S12 plays an important role in translational accuracy. This chain is Small ribosomal subunit protein uS4, found in Burkholderia pseudomallei (strain 1106a).